We begin with the raw amino-acid sequence, 209 residues long: Mitochondrial import inner membrane translocase subunit Tim23 (209 aa).

Helical transmembrane passes span 73–93 (FELA…FGAL), 125–145 (ALWA…GVII), and 181–197 (GLAG…YNNW).

The protein belongs to the Tim17/Tim22/Tim23 family. In terms of assembly, component of the TIM23 complex at least composed of TIMM23, TIMM17 (TIMM17A or TIMM17B) and TIMM50; within this complex, directly interacts with TIMM50. The complex interacts with the TIMM44 component of the PAM complex and with DNAJC15. Upon mitochondrial depolarization, interacts with PINK1; the interaction is required for PINK1 accumulation at the outer mitochondrial membrane, kinase activation by autophosphorylation and PRKN recruitement to mitochondria.

Its subcellular location is the mitochondrion inner membrane. Essential component of the TIM23 complex, a complex that mediates the translocation of transit peptide-containing proteins across the mitochondrial inner membrane. Has a role in the activation of stress-induced mitophagy by protecting PINK1 from OMA1-mediated degradation and facilitating its accumulation at the outer mitochondrial membrane in response to depolarization. The chain is Mitochondrial import inner membrane translocase subunit Tim23 (Timm23) from Rattus norvegicus (Rat).